Consider the following 454-residue polypeptide: Bifunctional protein GlmU (454 aa).

A pyrophosphorylase region spans residues 1-228 (MNKCAIILAA…FEETLGVNSR (228 aa)). Residues 8 to 11 (LAAG), K22, Q73, and 78 to 79 (GT) contribute to the UDP-N-acetyl-alpha-D-glucosamine site. D103 serves as a coordination point for Mg(2+). UDP-N-acetyl-alpha-D-glucosamine is bound by residues G140, E154, N169, and N226. N226 provides a ligand contact to Mg(2+). The tract at residues 229–249 (AELAKVESIMRNRINRTHLDN) is linker. Residues 250 to 454 (GVTIIDPLNT…EGWVERKKLK (205 aa)) form an N-acetyltransferase region. Residues R331 and K349 each contribute to the UDP-N-acetyl-alpha-D-glucosamine site. The active-site Proton acceptor is H361. 2 residues coordinate UDP-N-acetyl-alpha-D-glucosamine: Y364 and N375. Residues 384-385 (NY), A421, and R438 each bind acetyl-CoA.

This sequence in the N-terminal section; belongs to the N-acetylglucosamine-1-phosphate uridyltransferase family. The protein in the C-terminal section; belongs to the transferase hexapeptide repeat family. In terms of assembly, homotrimer. Mg(2+) is required as a cofactor.

Its subcellular location is the cytoplasm. The enzyme catalyses alpha-D-glucosamine 1-phosphate + acetyl-CoA = N-acetyl-alpha-D-glucosamine 1-phosphate + CoA + H(+). It carries out the reaction N-acetyl-alpha-D-glucosamine 1-phosphate + UTP + H(+) = UDP-N-acetyl-alpha-D-glucosamine + diphosphate. It functions in the pathway nucleotide-sugar biosynthesis; UDP-N-acetyl-alpha-D-glucosamine biosynthesis; N-acetyl-alpha-D-glucosamine 1-phosphate from alpha-D-glucosamine 6-phosphate (route II): step 2/2. It participates in nucleotide-sugar biosynthesis; UDP-N-acetyl-alpha-D-glucosamine biosynthesis; UDP-N-acetyl-alpha-D-glucosamine from N-acetyl-alpha-D-glucosamine 1-phosphate: step 1/1. Its pathway is bacterial outer membrane biogenesis; LPS lipid A biosynthesis. Functionally, catalyzes the last two sequential reactions in the de novo biosynthetic pathway for UDP-N-acetylglucosamine (UDP-GlcNAc). The C-terminal domain catalyzes the transfer of acetyl group from acetyl coenzyme A to glucosamine-1-phosphate (GlcN-1-P) to produce N-acetylglucosamine-1-phosphate (GlcNAc-1-P), which is converted into UDP-GlcNAc by the transfer of uridine 5-monophosphate (from uridine 5-triphosphate), a reaction catalyzed by the N-terminal domain. In Clostridium perfringens (strain SM101 / Type A), this protein is Bifunctional protein GlmU.